A 405-amino-acid polypeptide reads, in one-letter code: L-carnitine CoA-transferase (405 aa).

CoA contacts are provided by K97 and R104. D169 functions as the Nucleophile in the catalytic mechanism.

The protein belongs to the CoA-transferase III family. CaiB subfamily. In terms of assembly, homodimer.

Its subcellular location is the cytoplasm. The catalysed reaction is crotonobetainyl-CoA + (R)-carnitine = crotonobetaine + (R)-carnitinyl-CoA. It carries out the reaction 4-(trimethylamino)butanoyl-CoA + (R)-carnitine = (R)-carnitinyl-CoA + 4-(trimethylamino)butanoate. The protein operates within amine and polyamine metabolism; carnitine metabolism. Catalyzes the reversible transfer of the CoA moiety from gamma-butyrobetainyl-CoA to L-carnitine to generate L-carnitinyl-CoA and gamma-butyrobetaine. Is also able to catalyze the reversible transfer of the CoA moiety from gamma-butyrobetainyl-CoA or L-carnitinyl-CoA to crotonobetaine to generate crotonobetainyl-CoA. In Salmonella choleraesuis (strain SC-B67), this protein is L-carnitine CoA-transferase.